Here is a 199-residue protein sequence, read N- to C-terminus: 7-methyl-GTP pyrophosphatase (199 aa).

D76 acts as the Proton acceptor in catalysis.

The protein belongs to the Maf family. YceF subfamily. It depends on a divalent metal cation as a cofactor.

It localises to the cytoplasm. It carries out the reaction N(7)-methyl-GTP + H2O = N(7)-methyl-GMP + diphosphate + H(+). Nucleoside triphosphate pyrophosphatase that hydrolyzes 7-methyl-GTP (m(7)GTP). May have a dual role in cell division arrest and in preventing the incorporation of modified nucleotides into cellular nucleic acids. This chain is 7-methyl-GTP pyrophosphatase, found in Rhizobium meliloti (strain 1021) (Ensifer meliloti).